The primary structure comprises 537 residues: Light-independent protochlorophyllide reductase subunit B (537 aa).

Aspartate 36 provides a ligand contact to [4Fe-4S] cluster. The active-site Proton donor is aspartate 292. 428 to 429 (GL) contacts substrate. The segment at 459–483 (TAGETAGQATEAATAPATPGAPLTG) is disordered.

This sequence belongs to the ChlB/BchB/BchZ family. In terms of assembly, protochlorophyllide reductase is composed of three subunits; BchL, BchN and BchB. Forms a heterotetramer of two BchB and two BchN subunits. It depends on [4Fe-4S] cluster as a cofactor.

The enzyme catalyses chlorophyllide a + oxidized 2[4Fe-4S]-[ferredoxin] + 2 ADP + 2 phosphate = protochlorophyllide a + reduced 2[4Fe-4S]-[ferredoxin] + 2 ATP + 2 H2O. It participates in porphyrin-containing compound metabolism; bacteriochlorophyll biosynthesis (light-independent). In terms of biological role, component of the dark-operative protochlorophyllide reductase (DPOR) that uses Mg-ATP and reduced ferredoxin to reduce ring D of protochlorophyllide (Pchlide) to form chlorophyllide a (Chlide). This reaction is light-independent. The NB-protein (BchN-BchB) is the catalytic component of the complex. This chain is Light-independent protochlorophyllide reductase subunit B, found in Chloroherpeton thalassium (strain ATCC 35110 / GB-78).